A 322-amino-acid chain; its full sequence is Polyisoprenyl-teichoic acid--peptidoglycan teichoic acid transferase TagT (322 aa).

Over 1 to 19 (MEERSQRRKKKRKLKKWVK) the chain is Cytoplasmic. A helical; Signal-anchor for type II membrane protein membrane pass occupies residues 20–40 (VVAGLMAFLVIAAGSVGAYAF). At 41–322 (VKLNNASKEA…KKELQNDLGV (282 aa)) the chain is on the extracellular side.

It belongs to the LytR/CpsA/Psr (LCP) family. As to quaternary structure, interacts with MreB.

Its subcellular location is the cell membrane. Its pathway is cell wall biogenesis. Its function is as follows. May catalyze the final step in cell wall teichoic acid biosynthesis, the transfer of the anionic cell wall polymers (APs) from their lipid-linked precursor to the cell wall peptidoglycan (PG). The protein is Polyisoprenyl-teichoic acid--peptidoglycan teichoic acid transferase TagT of Bacillus subtilis (strain 168).